Consider the following 641-residue polypeptide: MSDEGPGTGPGNGLGQKEDTSGPDGSSGSGPQRRGGDNHGRGRGRGRGRGGGRPGAPGGSGSGPRHRDGVRRPQKRPSCIGCKGAHGGTGAGGGAGAGGAGAGGAGAGGAGAGGAGAGGAGAGGAGAGGAGAGGAGAGGAGAGGGAGAGGAGAGGAGAGGGAGAGGGAGAGGGAGAGGGAGAGGGAGAGGGAGAGGGAGAGGGAGAGGGAGAGGAGAGGAGAGGGAGAGGGAGAGGGAGAGGGAGAGGGAGAGGGAGAGGGAGAGGGAGAGGGAGAGGGAGAGGGAGAGGGAGAGGGAGAGGGAGAGGGAGAGGGAGAGGGAGAGGGGRGRGGSGGRGRGGSGGRGRGGSGGRRGRGRERARGGSRERARGRGRGRGEKRPRSPSSQSSSSGSPPRRPPPGRRPFFHPVAEADYFEYHQEGGPDGEPDMPPGAIEQGPADDPGEGPSTGPRGQGDGGRRKKGGWYGKHRGEGGSSQKFENIAEGLRLLLARCHVERTTEDGNWVAGVFVYGGSKTSLYNLRRGIGLAIPQCRLTPLSRLPFGMAPGPGPQPGPLRESIVCYFIVFLQTHIFAEGLKDAIKDLVLPKPAPTCNIKVTVCSFDDGVDLPPWFPPMVEGAAAEGDDGDDGDEGGDGDEGEEGQE.

A compositionally biased stretch (gly residues) spans 1–14 (MSDEGPGTGPGNGL). 2 disordered regions span residues 1–124 (MSDE…GAGG) and 234–475 (AGGG…GGSS). Residues 22-32 (GPDGSSGSGPQ) show a composition bias toward low complexity. An interaction with host C1QBP/P32 region spans residues 40–60 (GRGRGRGRGRGGGRPGAPGGS). Positions 40-67 (GRGRGRGRGRGGGRPGAPGGSGSGPRHR) are chromosome-tethering GR1. A compositionally biased stretch (basic residues) spans 41–50 (RGRGRGRGRG). Composition is skewed to gly residues over residues 51 to 62 (GGRPGAPGGSGS), 84 to 124 (GAHG…GAGG), and 234 to 352 (AGGG…GSGG). The tract at residues 65 to 89 (RHRDGVRRPQKRPSCIGCKGAHGGT) is UR1. A GAr region spans residues 90–325 (GAGGGAGAGG…AGAGGGAGAG (236 aa)). The interval 325-376 (GGGGRGRGGSGGRGRGGSGGRGRGGSGGRRGRGRERARGGSRERARGRGRGR) is interaction with host C1QBP/P32. The segment at 328-378 (GRGRGGSGGRGRGGSGGRGRGGSGGRRGRGRERARGGSRERARGRGRGRGE) is chromosome-tethering GR2. Residues 358–381 (RERARGGSRERARGRGRGRGEKRP) show a composition bias toward basic and acidic residues. The segment at 379-386 (KRPRSPSS) is nuclear localization signal. A compositionally biased stretch (low complexity) spans 383–394 (SPSSQSSSSGSP). Ser385 and Ser393 each carry phosphoserine. The tract at residues 387-395 (QSSSSGSPP) is interaction with host CSNK2B. The interval 436–450 (QGPADDPGEGPSTGP) is interaction with host USP7. The DBD/DD stretch occupies residues 452-607 (GQGDGGRRKK…CSFDDGVDLP (156 aa)). Residues Lys460, Lys461, and Tyr518 each coordinate DNA. Tyr518 serves as the catalytic For site-specific DNA cleavage activity. Positions 612–641 (PMVEGAAAEGDDGDDGDEGGDGDEGEEGQE) are disordered. Positions 620–641 (EGDDGDDGDEGGDGDEGEEGQE) are enriched in acidic residues.

It belongs to the herpesviridae EBNA1 family. In terms of assembly, homodimer. Dimers can assemble into higher-order oligomers like a homohexamer. Binding to the DS element involves 2 dimers of EBNA1. Interacts with human USP7; this interaction is independent and simultaneous to EBNA1 interaction with CSNK2B as well as necessary for PML nuclear bodies disruption by EBNA1. Interacts with host CSNK2B (via KSSR motif); the interaction requires phosphorylation of EBNA1, is independent and simultaneous to EBNA1 interaction with USP7 as well as necessary for PML nuclear bodies disruption by EBNA1. EBNA1, USP7 and CSNK2B form a ternary complex. EBNA1, USP7 and CSNK2B form a ternary complex. Interacts with human EBP2; it is not clear if this interaction is linked with the ability of EBNA1 to associate with host mitotic chromosomes. Interacts with BGLF4; this interaction facilitates the switch from latent to lytic DNA replication by down-regulating EBNA1 replication function. Interacts with human PAX5; this interaction promotes EBNA1-dependent transcription. Interacts with host KPNA1/Importin subunit alpha-5; this interaction allows the nuclear import of EBNA1. Interacts with host KPNA2/Importin subunit alpha-1; this interaction allows the nuclear import of EBNA1. Interacts with host C1QBP/P32. Interacts with host BIRC5/Survivin; this interaction is probably important for EBV episome maintenance in Burkitt's lymphoma host cells. In terms of processing, phosphorylation at Ser-385 increases the nuclear import efficiency of EBNA1. Post-translationally, phosphorylation at Ser-393 is required for interaction with CSNK2B.

It is found in the host nucleus. Its function is as follows. Responsible for the origin of replication (oriP) dependent replication and maintenance of viral episomes during latent infection. EBNA1 dimer interacts with the DS (dyad symmetry) element within the origin of replication oriP and with a host mitotic chromosome to initiate viral DNA replication during latency. EBNA1 binding to DS recruits the host origin recognition complex (ORC). Governs the faithful mitotic segregation of the viral episomes by binding both the FR (family of repeats) element within oriP and the host mitotic chromosomes. Forms a cell cycle-dependent tyrosine-dependent DNA cross-link and single-strand cleavage at oriP required for terminating replication and maintaining viral episomes. Counteracts the stabilization of host p53/TP53 by host USP7, thereby decreasing apoptosis and increasing host cell survival. Induces degradation of host PML through the ubiquitin-proteasome system, which promotes lytic reactivation and may impair the host cell DNA repair. Increases the association of CK2 with PML proteins which increases the phosphorylation of PML proteins by CK2, triggering the polyubiquitylation and degradation of PML. Displays inhibitory effects on a SUMO2-modified complex that includes STUB1, KAP1 and USP7. This inhibitory effect possibly participates to the maintenance of latency linked to PML silencing. This chain is Epstein-Barr nuclear antigen 1 (EBNA1), found in Homo sapiens (Human).